The primary structure comprises 38 residues: Large ribosomal subunit protein bL36 (38 aa).

The protein belongs to the bacterial ribosomal protein bL36 family.

This is Large ribosomal subunit protein bL36 from Psychrobacter cryohalolentis (strain ATCC BAA-1226 / DSM 17306 / VKM B-2378 / K5).